The chain runs to 282 residues: Pantothenate synthetase (282 aa).

30 to 37 (MGYLHEGH) serves as a coordination point for ATP. His37 functions as the Proton donor in the catalytic mechanism. Gln61 serves as a coordination point for (R)-pantoate. Gln61 is a beta-alanine binding site. 147–150 (GQKD) serves as a coordination point for ATP. Residue Gln153 participates in (R)-pantoate binding. ATP contacts are provided by residues Val176 and 184 to 187 (MSSR).

This sequence belongs to the pantothenate synthetase family. Homodimer.

The protein resides in the cytoplasm. The enzyme catalyses (R)-pantoate + beta-alanine + ATP = (R)-pantothenate + AMP + diphosphate + H(+). The protein operates within cofactor biosynthesis; (R)-pantothenate biosynthesis; (R)-pantothenate from (R)-pantoate and beta-alanine: step 1/1. Catalyzes the condensation of pantoate with beta-alanine in an ATP-dependent reaction via a pantoyl-adenylate intermediate. The polypeptide is Pantothenate synthetase (Caldicellulosiruptor bescii (strain ATCC BAA-1888 / DSM 6725 / KCTC 15123 / Z-1320) (Anaerocellum thermophilum)).